The primary structure comprises 196 residues: SPRY domain-containing protein 7 (196 aa).

N-acetylalanine is present on Ala2. Positions 2-184 constitute a B30.2/SPRY domain; that stretch reads AASAWCCLRC…FSEFYHTPPP (183 aa).

This chain is SPRY domain-containing protein 7 (Spryd7), found in Mus musculus (Mouse).